The following is a 390-amino-acid chain: MVRLPRKFKRVLLLVVLLTLVVFVRFKKQYIPTISVFEGSLIDNRDTLSYFNISNLEPSERSEWLPNKRVNAAFVTLARNEDLNDLLKSIRKLEKTFNHKYHYGWVFLNNEEFSDEFKEHVIEAVSGKCEFGLVPQEQWSIPEYIDQDKMHENWKKLQELGILYADKESYRHMCRFESGFFYRHPLVQKYEYYWRVEPSVDFFCDLDFDPFAYMKENNKAYAFTITVTEYSETIPSLWPSTKEFIKMHPNALHPNNALNFISNDDGETYNGCHFWTNFEIAKVDFWESEVYSKYFDYLDKSGNFFYERWGDAPVHSIAVSLFADRDNIHFFNEIGYWHPGSGHCPLDDATRAKCDCDPYESIDYNGWSCLDKFYTAFEMPFPENWSFYSH.

Residue Glu-279 is the Nucleophile of the active site.

The protein belongs to the glycosyltransferase 15 family.

The protein localises to the endoplasmic reticulum. It localises to the golgi apparatus. Its function is as follows. Mannosyltransferase involved in O-glycosylation of cell wall and secreted proteins. Plays a major role in extending alpha-1,2-linked mannose in the O-glycan pathway. The chain is O-glycoside alpha-1,2-mannosyltransferase omh1 (omh1) from Schizosaccharomyces pombe (strain 972 / ATCC 24843) (Fission yeast).